We begin with the raw amino-acid sequence, 162 residues long: UPF0305 protein MMP0665 (162 aa).

It belongs to the UPF0305 family.

This chain is UPF0305 protein MMP0665, found in Methanococcus maripaludis (strain DSM 14266 / JCM 13030 / NBRC 101832 / S2 / LL).